Here is a 97-residue protein sequence, read N- to C-terminus: YcgL domain-containing protein PST_1364 (97 aa).

In terms of domain architecture, YcgL spans Leu3–Pro87.

This Stutzerimonas stutzeri (strain A1501) (Pseudomonas stutzeri) protein is YcgL domain-containing protein PST_1364.